The sequence spans 192 residues: dTTP/UTP pyrophosphatase (192 aa).

Catalysis depends on Asp-70, which acts as the Proton acceptor.

It belongs to the Maf family. YhdE subfamily. Requires a divalent metal cation as cofactor.

It is found in the cytoplasm. The catalysed reaction is dTTP + H2O = dTMP + diphosphate + H(+). It carries out the reaction UTP + H2O = UMP + diphosphate + H(+). Functionally, nucleoside triphosphate pyrophosphatase that hydrolyzes dTTP and UTP. May have a dual role in cell division arrest and in preventing the incorporation of modified nucleotides into cellular nucleic acids. The chain is dTTP/UTP pyrophosphatase from Clostridium perfringens (strain ATCC 13124 / DSM 756 / JCM 1290 / NCIMB 6125 / NCTC 8237 / Type A).